The chain runs to 335 residues: Fructose-1,6-bisphosphatase class 1 (335 aa).

The Mg(2+) site is built by Glu-90, Asp-113, Leu-115, and Asp-116. Residues Asp-116–Ser-119, Asn-209, Tyr-242, and Lys-272 contribute to the substrate site. Mg(2+) is bound at residue Glu-278.

Belongs to the FBPase class 1 family. As to quaternary structure, homotetramer. The cofactor is Mg(2+).

The protein localises to the cytoplasm. The catalysed reaction is beta-D-fructose 1,6-bisphosphate + H2O = beta-D-fructose 6-phosphate + phosphate. Its pathway is carbohydrate biosynthesis; gluconeogenesis. In Histophilus somni (strain 2336) (Haemophilus somnus), this protein is Fructose-1,6-bisphosphatase class 1.